Reading from the N-terminus, the 358-residue chain is MSKSTATAQNLSFVLEGIHQVKFEDRPIPELKDPHDVLVNVKFTGICGSDVHYWEHGSIGQFVVKGPMVLGHESSGVISKVGSAVTGLKVGDRVAMEPGIPCRRCEPCKAGKYNLCEKMAFAATPPYDGTLAKFYVLPEDFCYKLPDNISLQEGALMEPLGVAVHIVKQASVTPGQSVIVFGAGPVGLLCCAVAKAFGAAKIIAVDIQKARLDFAKKYAATSTFEPAKVSAVDNADRLRKENNLGVGADVVIDASGAEPSVHTGIHVLRPGGTYVQGGMGRSEIMFPIMAACTKELAIKGSFRYGSGDYNLAVGLVASGKVNVKDLITGVVEFHDAEQAFKEVKAGKGIKTLIAGIQD.

Residues Cys-47, His-72, and Glu-73 each contribute to the Zn(2+) site. Gly-182 to Gly-187 provides a ligand contact to NAD(+).

The protein belongs to the zinc-containing alcohol dehydrogenase family. Requires Zn(2+) as cofactor.

It catalyses the reaction xylitol + NAD(+) = D-xylulose + NADH + H(+). It participates in carbohydrate degradation; L-arabinose degradation via L-arabinitol; D-xylulose 5-phosphate from L-arabinose (fungal route): step 4/5. Functionally, xylitol dehydrogenase which catalyzes the conversion of xylitol to D-xylulose. Xylose is a major component of hemicelluloses such as xylan. Most fungi utilize D-xylose via three enzymatic reactions, xylose reductase (XR), xylitol dehydrogenase (XDH), and xylulokinase, to form xylulose 5-phosphate, which enters pentose phosphate pathway. In Aspergillus fumigatus (strain CBS 144.89 / FGSC A1163 / CEA10) (Neosartorya fumigata), this protein is Probable D-xylulose reductase A (xdhA).